The primary structure comprises 336 residues: Probable carboxylesterase 6 (336 aa).

The disordered stretch occupies residues 1-20 (MGGTKLTHVTTTNPNNSNIH). Residues 7 to 19 (THVTTTNPNNSNI) are compositionally biased toward polar residues. The short motif at 96–98 (HGG) is the Involved in the stabilization of the negatively charged intermediate by the formation of the oxyanion hole element. Catalysis depends on residues S176, D276, and H303.

This sequence belongs to the 'GDXG' lipolytic enzyme family. Expressed in roots, leaves, flowers and siliques.

The enzyme catalyses a carboxylic ester + H2O = an alcohol + a carboxylate + H(+). Carboxylesterase acting on esters with varying acyl chain length. In Arabidopsis thaliana (Mouse-ear cress), this protein is Probable carboxylesterase 6 (CXE6).